A 791-amino-acid polypeptide reads, in one-letter code: Calcium-transporting ATPase CtpE (791 aa).

3 helical membrane passes run 53 to 73, 213 to 233, and 252 to 272; these read LFVI…LLII, ILQF…YTQL, and VPMV…VGVV. Catalysis depends on D299, which acts as the 4-aspartylphosphate intermediate. 3 residues coordinate Mg(2+): D299, T301, and D530. Helical transmembrane passes span 596 to 616, 627 to 647, 664 to 684, 697 to 717, 725 to 745, and 757 to 777; these read VYSV…KIFG, IHVT…LSLA, AALP…LVAY, ASTA…AVVA, VLLV…PLAQ, and VTSV…VLWW.

It belongs to the cation transport ATPase (P-type) (TC 3.A.3) family.

It localises to the cell membrane. The catalysed reaction is Ca(2+)(in) + ATP + H2O = Ca(2+)(out) + ADP + phosphate + H(+). Its function is as follows. P-type ATPase involved in specific uptake of calcium. Essential for growth and maintenance of cell surface integrity under Ca(2+)-deficient conditions. The chain is Calcium-transporting ATPase CtpE from Mycolicibacterium smegmatis (strain ATCC 700084 / mc(2)155) (Mycobacterium smegmatis).